A 265-amino-acid polypeptide reads, in one-letter code: Deoxyribose-phosphate aldolase 2 (265 aa).

The Proton donor/acceptor role is filled by Asp108. Lys173 functions as the Schiff-base intermediate with acetaldehyde in the catalytic mechanism. Lys207 serves as the catalytic Proton donor/acceptor.

This sequence belongs to the DeoC/FbaB aldolase family. DeoC type 2 subfamily.

The protein resides in the cytoplasm. The enzyme catalyses 2-deoxy-D-ribose 5-phosphate = D-glyceraldehyde 3-phosphate + acetaldehyde. It participates in carbohydrate degradation; 2-deoxy-D-ribose 1-phosphate degradation; D-glyceraldehyde 3-phosphate and acetaldehyde from 2-deoxy-alpha-D-ribose 1-phosphate: step 2/2. In terms of biological role, catalyzes a reversible aldol reaction between acetaldehyde and D-glyceraldehyde 3-phosphate to generate 2-deoxy-D-ribose 5-phosphate. The polypeptide is Deoxyribose-phosphate aldolase 2 (deoC2) (Yersinia pestis).